A 152-amino-acid polypeptide reads, in one-letter code: Small ribosomal subunit protein uS17A (152 aa).

The protein belongs to the universal ribosomal protein uS17 family. In terms of assembly, component of the small ribosomal subunit (SSU). Mature yeast ribosomes consist of a small (40S) and a large (60S) subunit. The 40S small subunit contains 1 molecule of ribosomal RNA (18S rRNA) and at least 33 different proteins. The large 60S subunit contains 3 rRNA molecules (25S, 5.8S and 5S rRNA) and at least 46 different proteins.

The protein resides in the cytoplasm. Its subcellular location is the nucleus. Functionally, component of the ribosome, a large ribonucleoprotein complex responsible for the synthesis of proteins in the cell. The small ribosomal subunit (SSU) binds messenger RNAs (mRNAs) and translates the encoded message by selecting cognate aminoacyl-transfer RNA (tRNA) molecules. The large subunit (LSU) contains the ribosomal catalytic site termed the peptidyl transferase center (PTC), which catalyzes the formation of peptide bonds, thereby polymerizing the amino acids delivered by tRNAs into a polypeptide chain. The nascent polypeptides leave the ribosome through a tunnel in the LSU and interact with protein factors that function in enzymatic processing, targeting, and the membrane insertion of nascent chains at the exit of the ribosomal tunnel. This is Small ribosomal subunit protein uS17A (rps1101) from Schizosaccharomyces pombe (strain 972 / ATCC 24843) (Fission yeast).